The primary structure comprises 270 residues: Imidazoleglycerol-phosphate dehydratase 1, chloroplastic (270 aa).

The transit peptide at 1–62 directs the protein to the chloroplast; sequence MELSSASAIL…QSQLRQSISC (62 aa). Position 63 is an N-acetylserine (Ser-63). Substrate contacts are provided by residues Glu-84, 110 to 118, 136 to 140, Arg-162, and Arg-184; these read HMLDQLASH and HHTNE. Residues His-110, His-136, His-137, and Glu-140 each contribute to the Mn(2+) site. Residues His-208, His-232, His-233, and Glu-236 each contribute to the Mn(2+) site. Substrate is bound by residues 232–240 and 262–264; these read HHIIEATFK and SSK. Residues 250 to 270 are disordered; the sequence is TETDPRRGGTIPSSKGVLSRS.

This sequence belongs to the imidazoleglycerol-phosphate dehydratase family. It depends on Mn(2+) as a cofactor.

The protein resides in the plastid. It is found in the chloroplast. The catalysed reaction is D-erythro-1-(imidazol-4-yl)glycerol 3-phosphate = 3-(imidazol-4-yl)-2-oxopropyl phosphate + H2O. It functions in the pathway amino-acid biosynthesis; L-histidine biosynthesis; L-histidine from 5-phospho-alpha-D-ribose 1-diphosphate: step 6/9. This Arabidopsis thaliana (Mouse-ear cress) protein is Imidazoleglycerol-phosphate dehydratase 1, chloroplastic.